A 399-amino-acid chain; its full sequence is Phosphoglycerate kinase (399 aa).

Residues aspartate 22–asparagine 24, arginine 37, histidine 60–arginine 63, arginine 119, and arginine 152 each bind substrate. ATP-binding positions include lysine 202, glutamate 324, and glycine 354–threonine 357.

This sequence belongs to the phosphoglycerate kinase family. As to quaternary structure, monomer.

The protein resides in the cytoplasm. The catalysed reaction is (2R)-3-phosphoglycerate + ATP = (2R)-3-phospho-glyceroyl phosphate + ADP. The protein operates within carbohydrate degradation; glycolysis; pyruvate from D-glyceraldehyde 3-phosphate: step 2/5. This Sinorhizobium medicae (strain WSM419) (Ensifer medicae) protein is Phosphoglycerate kinase.